The primary structure comprises 198 residues: Phage-like element PBSX protein XkdA (198 aa).

It to B.subtilis YqaB.

This Bacillus subtilis (strain 168) protein is Phage-like element PBSX protein XkdA (xkdA).